The sequence spans 138 residues: ATP synthase epsilon chain (138 aa).

The protein belongs to the ATPase epsilon chain family. In terms of assembly, F-type ATPases have 2 components, CF(1) - the catalytic core - and CF(0) - the membrane proton channel. CF(1) has five subunits: alpha(3), beta(3), gamma(1), delta(1), epsilon(1). CF(0) has three main subunits: a, b and c.

Its subcellular location is the cell inner membrane. Produces ATP from ADP in the presence of a proton gradient across the membrane. The sequence is that of ATP synthase epsilon chain from Endomicrobium trichonymphae.